Consider the following 662-residue polypeptide: Sporulation protein RMD8 (662 aa).

Disordered stretches follow at residues 1-136 (MSYK…RTSK), 286-320 (YELE…SFNP), and 346-406 (LKKE…QNDF). S2 bears the N-acetylserine mark. Positions 99–121 (SARREERLSSSSSDRPRQYERLS) are enriched in basic and acidic residues. Residues 286-304 (YELETSGNNNNANQDTTTV) are compositionally biased toward polar residues. Low complexity predominate over residues 383–395 (SSRSPASPSSIST). A helical transmembrane segment spans residues 630–647 (VTWWFILVILFGVIFSLT).

The protein belongs to the RMD1/sif2 family.

The protein localises to the membrane. Its function is as follows. Required for sporulation. The protein is Sporulation protein RMD8 (RMD8) of Saccharomyces cerevisiae (strain ATCC 204508 / S288c) (Baker's yeast).